A 307-amino-acid chain; its full sequence is Serine/threonine-protein phosphatase 4 catalytic subunit (307 aa).

The Mn(2+) site is built by D54, H56, D82, and N114. H115 serves as the catalytic Proton donor. Positions 164 and 238 each coordinate Mn(2+). Position 307 is a leucine methyl ester (L307).

It belongs to the PPP phosphatase family. PP-4 (PP-X) subfamily. As to quaternary structure, serine/threonine-protein phosphatase 4 (PP4) occurs in different assemblies of the catalytic and one or more regulatory subunits. Probably part of a PP4 PPP4C-PPP4R2-PPP4R3 complex containing Pp4-19C, PPP4R2r and flfl. Interacts with Ptpa; thereby mediating basal localization of the Miranda (Mira) complex; probably by dephosphorylation of Mira. Mn(2+) is required as a cofactor. Post-translationally, reversibly methyl esterified on Leu-307 by leucine carboxyl methyltransferase 1 (LCMT1) and protein phosphatase methylesterase 1 (PPME1). Carboxyl methylation influences the affinity of the catalytic subunit for the different regulatory subunits, thereby modulating the PP2A holoenzyme's substrate specificity, enzyme activity and cellular localization.

It is found in the cytoplasm. It localises to the nucleus. The protein resides in the cytoskeleton. The protein localises to the microtubule organizing center. Its subcellular location is the centrosome. The enzyme catalyses O-phospho-L-seryl-[protein] + H2O = L-seryl-[protein] + phosphate. It carries out the reaction O-phospho-L-threonyl-[protein] + H2O = L-threonyl-[protein] + phosphate. Protein phosphatase that regulates many processes such as microtubule organization at centrosomes. The probable PP4 complex Pp4-19C-PPP4R2r-flfl (PPP4C-PPP4R2-PPP4R3) is required to prevent caspase-induced cell death (in vitro). This Drosophila melanogaster (Fruit fly) protein is Serine/threonine-protein phosphatase 4 catalytic subunit (Pp4-19C).